Consider the following 94-residue polypeptide: MNLNMLHDNVLIEALEESLNNSPIQLPESAKKKPTKGKVVAVGPGSYNNNGNLIPMTLKVGDVVFYRQWAGNEVEFSDKKYIVMKESDIIAKEV.

Belongs to the GroES chaperonin family. In terms of assembly, heptamer of 7 subunits arranged in a ring. Interacts with the chaperonin GroEL.

It localises to the cytoplasm. Its function is as follows. Together with the chaperonin GroEL, plays an essential role in assisting protein folding. The GroEL-GroES system forms a nano-cage that allows encapsulation of the non-native substrate proteins and provides a physical environment optimized to promote and accelerate protein folding. GroES binds to the apical surface of the GroEL ring, thereby capping the opening of the GroEL channel. The polypeptide is Co-chaperonin GroES (Ehrlichia ruminantium (strain Gardel)).